The primary structure comprises 857 residues: Thiamine repressible genes regulatory protein thi5 (857 aa).

The segment at residues 38–64 is a DNA-binding region (zn(2)-C6 fungal-type); that stretch reads CLSCRAKKIRCSGSEPCQACIATPSQC. Disordered regions lie at residues 152–175 and 797–819; these read AVKS…NFSS and GHAL…HPSQ. Low complexity predominate over residues 159-175; it reads SFPSSSTPPSSDSNFSS. The segment covering 803-819 has biased composition (polar residues); it reads PESNNSSNSFKPSHPSQ.

It is found in the nucleus. Functionally, transcription factor that activates the nmt1 promoter. Regulation of thiamine repressible genes. Negatively regulates conjugation during meiosis, by inducing negative regulators which delay conjugation. Involved in thi1 regulation. This is Thiamine repressible genes regulatory protein thi5 (thi5) from Schizosaccharomyces pombe (strain 972 / ATCC 24843) (Fission yeast).